The following is a 308-amino-acid chain: Aspartate carbamoyltransferase catalytic subunit (308 aa).

Positions 55 and 56 each coordinate carbamoyl phosphate. Residue lysine 83 coordinates L-aspartate. Carbamoyl phosphate-binding residues include arginine 105, histidine 133, and glutamine 136. L-aspartate contacts are provided by arginine 166 and arginine 220. Carbamoyl phosphate is bound by residues glycine 261 and proline 262.

The protein belongs to the aspartate/ornithine carbamoyltransferase superfamily. ATCase family. In terms of assembly, heterododecamer (2C3:3R2) of six catalytic PyrB chains organized as two trimers (C3), and six regulatory PyrI chains organized as three dimers (R2).

The catalysed reaction is carbamoyl phosphate + L-aspartate = N-carbamoyl-L-aspartate + phosphate + H(+). It participates in pyrimidine metabolism; UMP biosynthesis via de novo pathway; (S)-dihydroorotate from bicarbonate: step 2/3. Functionally, catalyzes the condensation of carbamoyl phosphate and aspartate to form carbamoyl aspartate and inorganic phosphate, the committed step in the de novo pyrimidine nucleotide biosynthesis pathway. The polypeptide is Aspartate carbamoyltransferase catalytic subunit (Chlorobium limicola (strain DSM 245 / NBRC 103803 / 6330)).